Here is a 376-residue protein sequence, read N- to C-terminus: MAKRDFYDVLGVSKSASPEELKSAYRKLAVKYHPDKNPGDKASEDKFKEAGEAYGVLSDKEKKQNYDNFGHAAFEGGGGRQGGGFGGGFGGADFSDIFEDFFGDFGGGQSRGRRKTNNRGSDLRYDLSITLEEAYEGKKQDIKFSTTEKCNTCNGNGSKPGHSPDRCTVCGGNGKVRSNQGFFTVQQTCPQCAGSGEEITNPCTDCNGQGNKQASKKISVTIPKGVDDGTRIRLAGKGEAGSKGGANGDLYLFVNVHSHDLFKRSDENLFFEFPISIADAALGTTIEIPTIDGGKAKIKIPDGTQNGKQFRLKGKGMPYMRGSGNGDLYVQVNTEVPISLNKEQKALLEKFREIENEKSNPSIKQFFQKAKSFWKN.

One can recognise a J domain in the interval 5–70; the sequence is DFYDVLGVSK…EKKQNYDNFG (66 aa). The CR-type zinc-finger motif lies at 137–215; that stretch reads GKKQDIKFST…CNGQGNKQAS (79 aa). Residues Cys150, Cys153, Cys167, Cys170, Cys189, Cys192, Cys203, and Cys206 each coordinate Zn(2+). CXXCXGXG motif repeat units lie at residues 150–157, 167–174, 189–196, and 203–210; these read CNTCNGNG, CTVCGGNG, CPQCAGSG, and CTDCNGQG.

The protein belongs to the DnaJ family. Homodimer. Zn(2+) is required as a cofactor.

The protein resides in the cytoplasm. Its function is as follows. Participates actively in the response to hyperosmotic and heat shock by preventing the aggregation of stress-denatured proteins and by disaggregating proteins, also in an autonomous, DnaK-independent fashion. Unfolded proteins bind initially to DnaJ; upon interaction with the DnaJ-bound protein, DnaK hydrolyzes its bound ATP, resulting in the formation of a stable complex. GrpE releases ADP from DnaK; ATP binding to DnaK triggers the release of the substrate protein, thus completing the reaction cycle. Several rounds of ATP-dependent interactions between DnaJ, DnaK and GrpE are required for fully efficient folding. Also involved, together with DnaK and GrpE, in the DNA replication of plasmids through activation of initiation proteins. The sequence is that of Chaperone protein DnaJ from Pelagibacter ubique (strain HTCC1062).